Here is a 392-residue protein sequence, read N- to C-terminus: Galactokinase (392 aa).

The alpha-D-galactose site is built by R37, E43, H44, and D46. G136, G138, S140, and S141 together coordinate ATP. Residue D186 participates in alpha-D-galactose binding. The active-site Proton acceptor is the D186. At S230 the chain carries Phosphoserine. Y236 is an alpha-D-galactose binding site.

This sequence belongs to the GHMP kinase family. GalK subfamily. In terms of assembly, homodimer.

The enzyme catalyses alpha-D-galactose + ATP = alpha-D-galactose 1-phosphate + ADP + H(+). The protein operates within carbohydrate metabolism; galactose metabolism. In terms of biological role, catalyzes the transfer of a phosphate from ATP to alpha-D-galactose and participates in the first committed step in the catabolism of galactose. The polypeptide is Galactokinase (Homo sapiens (Human)).